The chain runs to 247 residues: Transcription factor bHLH92 (247 aa).

The bHLH domain maps to Glu85–Leu134.

In terms of assembly, homodimer.

The protein resides in the nucleus. In Arabidopsis thaliana (Mouse-ear cress), this protein is Transcription factor bHLH92 (BHLH92).